The following is a 119-amino-acid chain: Urease subunit beta (119 aa).

The protein belongs to the urease beta subunit family. In terms of assembly, heterotrimer of UreA (gamma), UreB (beta) and UreC (alpha) subunits. Three heterotrimers associate to form the active enzyme.

It localises to the cytoplasm. It carries out the reaction urea + 2 H2O + H(+) = hydrogencarbonate + 2 NH4(+). Its pathway is nitrogen metabolism; urea degradation; CO(2) and NH(3) from urea (urease route): step 1/1. This Tolumonas auensis (strain DSM 9187 / NBRC 110442 / TA 4) protein is Urease subunit beta.